The chain runs to 280 residues: Small ribosomal subunit protein uS3 (280 aa).

In terms of domain architecture, KH type-2 spans 38-106; sequence IRRLLSTGLE…QVQLNILEVR (69 aa). Positions 215–280 are disordered; sequence AAAAPAGAER…PAAEPQSTES (66 aa). Residues 238–280 show a composition bias toward low complexity; the sequence is SGASGTTATGTEAGRAAASADESTAAGQPAEAAPAAEPQSTES.

It belongs to the universal ribosomal protein uS3 family. As to quaternary structure, part of the 30S ribosomal subunit. Forms a tight complex with proteins S10 and S14.

Functionally, binds the lower part of the 30S subunit head. Binds mRNA in the 70S ribosome, positioning it for translation. This chain is Small ribosomal subunit protein uS3, found in Mycobacterium avium (strain 104).